We begin with the raw amino-acid sequence, 254 residues long: Type III pantothenate kinase (254 aa).

Residue 6–13 (DVGNSNIV) participates in ATP binding. Residues Tyr-100 and 107–110 (GADR) contribute to the substrate site. Asp-109 acts as the Proton acceptor in catalysis. A K(+)-binding site is contributed by Asp-129. Position 132 (Thr-132) interacts with ATP. Thr-184 is a binding site for substrate.

This sequence belongs to the type III pantothenate kinase family. In terms of assembly, homodimer. It depends on NH4(+) as a cofactor. K(+) is required as a cofactor.

The protein localises to the cytoplasm. The enzyme catalyses (R)-pantothenate + ATP = (R)-4'-phosphopantothenate + ADP + H(+). The protein operates within cofactor biosynthesis; coenzyme A biosynthesis; CoA from (R)-pantothenate: step 1/5. Functionally, catalyzes the phosphorylation of pantothenate (Pan), the first step in CoA biosynthesis. The chain is Type III pantothenate kinase from Citrifermentans bemidjiense (strain ATCC BAA-1014 / DSM 16622 / JCM 12645 / Bem) (Geobacter bemidjiensis).